The sequence spans 460 residues: Chromosomal replication initiator protein DnaA (460 aa).

The interval 1–91 is domain I, interacts with DnaA modulators; sequence MNLTSPKVST…SLWQSEDKSI (91 aa). Positions 91–122 are domain II; that stretch reads IRSIDIQVIEERNSNFNVILKNREESNHNLGS. Positions 123 to 342 are domain III, AAA+ region; sequence PLDPRFTFDN…GALNKVTHTS (220 aa). Positions 169, 171, 172, and 173 each coordinate ATP. The interval 343–460 is domain IV, binds dsDNA; it reads LIGRSMTVES…EINRLKKMFK (118 aa).

It belongs to the DnaA family. As to quaternary structure, oligomerizes as a right-handed, spiral filament on DNA at oriC.

Its subcellular location is the cytoplasm. Plays an essential role in the initiation and regulation of chromosomal replication. ATP-DnaA binds to the origin of replication (oriC) to initiate formation of the DNA replication initiation complex once per cell cycle. Binds the DnaA box (a 9 base pair repeat at the origin) and separates the double-stranded (ds)DNA. Forms a right-handed helical filament on oriC DNA; dsDNA binds to the exterior of the filament while single-stranded (ss)DNA is stabiized in the filament's interior. The ATP-DnaA-oriC complex binds and stabilizes one strand of the AT-rich DNA unwinding element (DUE), permitting loading of DNA polymerase. After initiation quickly degrades to an ADP-DnaA complex that is not apt for DNA replication. Binds acidic phospholipids. This Wolbachia pipientis wMel protein is Chromosomal replication initiator protein DnaA.